Consider the following 392-residue polypeptide: Na(+)/H(+) antiporter NhaA (392 aa).

11 helical membrane-spanning segments follow: residues 16–36 (ILLI…LSAA), 58–78 (LLLW…GLEV), 93–113 (ITLP…IFIL), 124–144 (GWAI…SLLG), 153–173 (IFLM…IALF), 176–196 (TDLS…LFIM), 199–219 (MDVA…VSVL), 257–277 (DLHY…NAGV), 295–315 (VMLG…WLAI), 328–348 (WMML…SLFV), and 362–382 (ADKL…YLIL).

It belongs to the NhaA Na(+)/H(+) (TC 2.A.33) antiporter family.

It localises to the cell inner membrane. It catalyses the reaction Na(+)(in) + 2 H(+)(out) = Na(+)(out) + 2 H(+)(in). In terms of biological role, na(+)/H(+) antiporter that extrudes sodium in exchange for external protons. In Sulfurovum sp. (strain NBC37-1), this protein is Na(+)/H(+) antiporter NhaA.